We begin with the raw amino-acid sequence, 159 residues long: uncharacterized protein (159 aa).

An HTH asnC-type domain is found at 6-66; sequence LSKKDWEIIK…YLRFDKLGYT (61 aa). The segment at residues 25-44 is a DNA-binding region (H-T-H motif); it reads DAEIGRRIGLSKSAVRWRRI.

This is an uncharacterized protein from Pyrococcus horikoshii (strain ATCC 700860 / DSM 12428 / JCM 9974 / NBRC 100139 / OT-3).